The sequence spans 661 residues: uncharacterized protein (661 aa).

The first 24 residues, 1–24, serve as a signal peptide directing secretion; sequence MKTLKTLKIFIIVFIASVSLASFA. Transmembrane regions (helical) follow at residues 226-246, 254-274, 410-430, 436-456, 469-489, and 562-582; these read IIGA…ALNT, IALF…LGPL, IILA…LYFI, CMIT…MALF, VCIS…LLIT, and VVSI…FYYF. The segment at 629–661 is disordered; that stretch reads GKPLVGDKPGVGGKRKEGEQQGGDLASGSGGGK.

It belongs to the TrbL/VirB6 family.

Its subcellular location is the cell membrane. This is an uncharacterized protein from Rickettsia conorii (strain ATCC VR-613 / Malish 7).